Here is a 372-residue protein sequence, read N- to C-terminus: Adaptive-response sensory-kinase SasA (372 aa).

The Histidine kinase domain maps to 147-360 (MVAHELRTPL…CFHFTVPVWQ (214 aa)). Phosphohistidine; by autocatalysis is present on H150.

In terms of assembly, homooligomerizes. Interacts with KaiC. Participates in the KaiBC complex, whose core is composed of a KaiC homohexamer and 6 KaiB.

The catalysed reaction is ATP + protein L-histidine = ADP + protein N-phospho-L-histidine.. Its function is as follows. Member of the two-component regulatory system SasA/RpaA involved in genome-wide circadian gene expression. One of several clock output pathways. Participates in the Kai clock protein complex, the main circadian regulator in cyanobacteria, via its interaction with KaiC. KaiC enhances the autophosphorylation activity of SasA, which then transfers its phosphate group to RpaA to activate it. In addition to its output function, recruits fold-shifted KaiB (KaiB(fs)) to KaiC to cooperatively form the KaiB(6):KaiC(6) complex (independent of SasA kinase activity). Required for robustness of the circadian rhythm of gene expression and is involved in clock output, also required for adaptation to light/dark cycles. This chain is Adaptive-response sensory-kinase SasA, found in Prochlorococcus marinus subsp. pastoris (strain CCMP1986 / NIES-2087 / MED4).